The following is a 299-amino-acid chain: Circadian clock oscillator protein KaiA (299 aa).

The interval S9 to P148 is psR domain, binds oxidized quinones. The KaiA N-terminal domain occupies S9 to L179. Residues G180 to R188 form a flexible linker region. A KaiA C-terminal domain is found at N189–K297.

As to quaternary structure, homodimer. The KaiABC complex composition changes during the circadian cycle to control KaiC phosphorylation. Complexes KaiC(6), KaiA(2-4):KaiC(6), KaiB(6):KaiC(6) and KaiC(6):KaiB(6):KaiA(12) are among the most important forms, many form cooperatively. KaiA and CikA bind to the same region of the KaiB(fs) form and therefore compete.

Its function is as follows. Key component of the KaiABC oscillator complex, which constitutes the main circadian regulator in cyanobacteria. Complex composition changes during the circadian cycle to control KaiC phosphorylation. KaiA stimulates KaiC autophosphorylation, while KaiB sequesters KaiA, leading to KaiC autodephosphorylation. KaiA binding to the KaiC CII domain during the subjective day yields KaiA(2-4):KaiC(6) complexes which stimulate KaiC autophosphorylation. Phospho-Ser-431 KaiC accumulation triggers binding of KaiB during the subjective night to form the KaiB(6):KaiC(6) complex, leading to changes in the output regulators CikA and SasA. KaiB(6):KaiC(6) formation exposes a site for KaiA binding on KaiB that sequesters KaiA from KaiC's CII domain, making the KaiC(6):KaiB(6):KaiA(12) complex resulting in KaiC autodephosphorylation. Complete dephosphorylation of KaiC leads to dissociation of KaiA(2):KaiB(1), completing 1 cycle of the Kai oscillator. In terms of biological role, binds oxidized quinones via the N-terminal PsR domain, allowing it to sense redox changes and possibly mediate clock input. The sequence is that of Circadian clock oscillator protein KaiA from Acaryochloris marina (strain MBIC 11017).